The following is a 305-amino-acid chain: Ribosomal RNA small subunit methyltransferase H (305 aa).

S-adenosyl-L-methionine-binding positions include 47–49 (GGH), D66, F93, D108, and Q115. The disordered stretch occupies residues 279 to 305 (ADSNEKLNNPRSRSAKLRLAKKRNPNE). Basic residues predominate over residues 291–305 (RSAKLRLAKKRNPNE).

This sequence belongs to the methyltransferase superfamily. RsmH family.

Its subcellular location is the cytoplasm. The catalysed reaction is cytidine(1402) in 16S rRNA + S-adenosyl-L-methionine = N(4)-methylcytidine(1402) in 16S rRNA + S-adenosyl-L-homocysteine + H(+). Its function is as follows. Specifically methylates the N4 position of cytidine in position 1402 (C1402) of 16S rRNA. The sequence is that of Ribosomal RNA small subunit methyltransferase H from Prochlorococcus marinus (strain SARG / CCMP1375 / SS120).